The following is a 347-amino-acid chain: Indole-3-glycerol phosphate lyase, chloroplastic (347 aa).

Disordered regions lie at residues 1–38 (MAFA…TPRR) and 64–89 (APPQ…RSRP). The N-terminal 53 residues, 1-53 (MAFAPKTSSSSSLSSALQAAQSPPLLLRRMSSTATPRRRYDAAVVVTTTTTAR), are a transit peptide targeting the chloroplast. Low complexity predominate over residues 8–27 (SSSSSLSSALQAAQSPPLLL). The span at 64-76 (APPQAPAPAPVPP) shows a compositional bias: pro residues.

This sequence belongs to the TrpA family. As to quaternary structure, tetramer of two alpha and two beta chains for the tryptophan synthase activity. Homodimer of alpha chains for the indole-3-glycerol phosphate lyase activity.

It is found in the plastid. The protein localises to the chloroplast. It carries out the reaction (1S,2R)-1-C-(indol-3-yl)glycerol 3-phosphate = indole + D-glyceraldehyde 3-phosphate. It catalyses the reaction (1S,2R)-1-C-(indol-3-yl)glycerol 3-phosphate + L-serine = D-glyceraldehyde 3-phosphate + L-tryptophan + H2O. It functions in the pathway secondary metabolite biosynthesis; 2,4-dihydroxy-1,4-benzoxazin-3-one biosynthesis; 2,4-dihydroxy-1,4-benzoxazin-3-one from indoleglycerol phosphate: step 1/5. Its pathway is amino-acid biosynthesis; L-tryptophan biosynthesis; L-tryptophan from chorismate: step 5/5. In terms of biological role, the alpha subunit is responsible for the aldol cleavage of indoleglycerol phosphate to indole and glyceraldehyde 3-phosphate. In bacteria, tryptophan synthase alpha (TSA) activity is almost completely dependent on formation of an active alpha2beta2 complex with tryptophan synthase beta (TSB), and indole is usually not released during tryptophan synthesis. In maize, the TSA homolog BX1 catalyzes the formation of free indole from indole-3-glycerol phosphate, independently of TSB. The sequence is that of Indole-3-glycerol phosphate lyase, chloroplastic (BX1) from Zea mays (Maize).